Consider the following 211-residue polypeptide: Large ribosomal subunit protein uL3 (211 aa).

The tract at residues 122–147 is disordered; the sequence is AIKRHGQSRGPMAHGSRYHRRPGSMG.

This sequence belongs to the universal ribosomal protein uL3 family. As to quaternary structure, part of the 50S ribosomal subunit. Forms a cluster with proteins L14 and L19.

Functionally, one of the primary rRNA binding proteins, it binds directly near the 3'-end of the 23S rRNA, where it nucleates assembly of the 50S subunit. The polypeptide is Large ribosomal subunit protein uL3 (Geobacillus sp. (strain WCH70)).